The primary structure comprises 385 residues: Glucans biosynthesis protein C (385 aa).

Transmembrane regions (helical) follow at residues alanine 17–tryptophan 37, methionine 60–leucine 80, valine 91–glutamine 111, isoleucine 137–phenylalanine 157, lysine 173–isoleucine 193, phenylalanine 212–isoleucine 232, leucine 239–leucine 259, threonine 274–glycine 294, alanine 311–threonine 331, and tryptophan 338–isoleucine 358.

This sequence belongs to the acyltransferase 3 family. OpgC subfamily.

Its subcellular location is the cell membrane. It participates in glycan metabolism; osmoregulated periplasmic glucan (OPG) biosynthesis. Its function is as follows. Necessary for the succinyl substitution of periplasmic glucans. Could catalyze the transfer of succinyl residues from the cytoplasmic side of the membrane to the nascent glucan backbones on the periplasmic side of the membrane. The polypeptide is Glucans biosynthesis protein C (Shigella dysenteriae serotype 1 (strain Sd197)).